The primary structure comprises 298 residues: Ribosomal RNA small subunit methyltransferase H (298 aa).

S-adenosyl-L-methionine is bound by residues 38–40 (GGH), Asp-57, Phe-84, Asp-100, and Gln-107.

It belongs to the methyltransferase superfamily. RsmH family.

The protein resides in the cytoplasm. The enzyme catalyses cytidine(1402) in 16S rRNA + S-adenosyl-L-methionine = N(4)-methylcytidine(1402) in 16S rRNA + S-adenosyl-L-homocysteine + H(+). Functionally, specifically methylates the N4 position of cytidine in position 1402 (C1402) of 16S rRNA. The sequence is that of Ribosomal RNA small subunit methyltransferase H from Acaryochloris marina (strain MBIC 11017).